The following is a 1007-amino-acid chain: SUPPRESSOR OF ABI3-5 (1007 aa).

Disordered regions lie at residues 1 to 185 and 204 to 269; these read MDPS…RDRE and ESPH…FSAT. 4 stretches are compositionally biased toward basic and acidic residues: residues 40–49, 94–120, 138–185, and 204–214; these read PDERLMRDDV, YYHDSEAGSRNGHYRDHEHERSSRYDG, HSRD…RDRE, and ESPHKRYEKSR. Over residues 227 to 236 the composition is skewed to basic residues; the sequence is RSPRGRSHGR. Residues 237 to 264 are compositionally biased toward basic and acidic residues; sequence SYREDSYEGDHWNESERRREYEDRHNQD. Positions 272 to 352 constitute an RRM 1 domain; it reads ATVVVKGLSM…RKLMFHYSQP (81 aa). A RanBP2-type zinc finger spans residues 378–407; it reads VPTDWICTICGCINFARRTSCFQCNEPKTK. In terms of domain architecture, RRM 2 spans 432–512; sequence HVLVVRGLDE…KILRVAYAKS (81 aa). Disordered regions lie at residues 556-581, 631-656, 725-755, 771-797, 810-910, and 945-977; these read GEKQNTGGQAQGVGEIESQKGTSAPQ, PDQNNESKVTENQPDSAKKEKSSQQK, HETQIQRPSPSLGDNPPTVSAEARSSFSTGQ, STSNHGVSALTTAESSSSSTTGGTLMG, ASSS…GITT, and SGLGKDGSGMKEPVQAQGVDRRAGLGSQQKKVD. A compositionally biased stretch (polar residues) spans 631–645; it reads PDQNNESKVTENQPD. Low complexity-rich tracts occupy residues 778-793 and 823-835; these read SALTTAESSSSSTTGG and PSASPASVSVSGS. Over residues 849-867 the composition is skewed to basic and acidic residues; it reads THREQPQTSYRDRAAERRN. The G-patch domain maps to 928-974; it reads ESNVGNRMLRNMGWHEGSGLGKDGSGMKEPVQAQGVDRRAGLGSQQK.

As to quaternary structure, interacts with the pre-spliceosomal component U2AF65A. Ubiquitous with highest expression in siliques toward the end of seed maturation.

It localises to the nucleus. Functionally, splicing factor that controls alternative splicing of the developmental regulator ABI3. Reduces splicing of a cryptic intron in ABI3, leading to a decreased in ABI3-beta transcript. Regulates the splicing of the receptor-like kinase SNC4/LRKL-2.6. The polypeptide is SUPPRESSOR OF ABI3-5 (Arabidopsis thaliana (Mouse-ear cress)).